The sequence spans 364 residues: MITAEKKKKNKFLPNFEKQSIYSLRYDEMQDWLVQNGQQKFRAKQIFEWLYEKRVDDIDDMTNLSKELREVLKDNFTMTTMTTVVKQESKDGTIKFLFELQDGYTIETVLMRHEYGNSVCVTTQVGCRIGCTFCASTLGGLKRNLEAGEIVSQVLTVQKALDETEERVSQIVIMGIGEPFENYDEMMDFLKIVNDDNGLNIGARHITVSTSGIIPRIYDFADEDIQINFAVSLHGANDEIRSRLMPINRAYNVEKLMEAIHYYQEKTNRRITFEYGLFGGVNDQIEHARELAHLIQELNCHVNLIPVNHVPERNYVKTPKEDIFKFEKELKRLGINATIRREQGADIDAACGQLRAKERKVETR.

The active-site Proton acceptor is Glu107. Positions 113–346 constitute a Radical SAM core domain; the sequence is HEYGNSVCVT…ATIRREQGAD (234 aa). Cys120 and Cys351 are joined by a disulfide. Cys127, Cys131, and Cys134 together coordinate [4Fe-4S] cluster. S-adenosyl-L-methionine is bound by residues 177–178, Ser209, 232–234, and Asn308; these read GE and SLH. The active-site S-methylcysteine intermediate is Cys351.

It belongs to the radical SAM superfamily. RlmN family. [4Fe-4S] cluster serves as cofactor.

Its subcellular location is the cytoplasm. The enzyme catalyses adenosine(2503) in 23S rRNA + 2 reduced [2Fe-2S]-[ferredoxin] + 2 S-adenosyl-L-methionine = 2-methyladenosine(2503) in 23S rRNA + 5'-deoxyadenosine + L-methionine + 2 oxidized [2Fe-2S]-[ferredoxin] + S-adenosyl-L-homocysteine. The catalysed reaction is adenosine(37) in tRNA + 2 reduced [2Fe-2S]-[ferredoxin] + 2 S-adenosyl-L-methionine = 2-methyladenosine(37) in tRNA + 5'-deoxyadenosine + L-methionine + 2 oxidized [2Fe-2S]-[ferredoxin] + S-adenosyl-L-homocysteine. In terms of biological role, specifically methylates position 2 of adenine 2503 in 23S rRNA and position 2 of adenine 37 in tRNAs. Confers resistance to some classes of antibiotics. The protein is Probable dual-specificity RNA methyltransferase RlmN of Staphylococcus saprophyticus subsp. saprophyticus (strain ATCC 15305 / DSM 20229 / NCIMB 8711 / NCTC 7292 / S-41).